The primary structure comprises 517 residues: GMP synthase [glutamine-hydrolyzing] (517 aa).

The 190-residue stretch at 4-193 folds into the Glutamine amidotransferase type-1 domain; it reads KIIILDFGSQ…VVDICGGKQD (190 aa). Residue C79 is the Nucleophile of the active site. Catalysis depends on residues H167 and E169. Residues 194 to 382 enclose the GMPS ATP-PPase domain; sequence WSAASFIETT…LGMPEHLITR (189 aa). 221-227 contacts ATP; sequence SGGVDSS.

As to quaternary structure, homodimer.

The enzyme catalyses XMP + L-glutamine + ATP + H2O = GMP + L-glutamate + AMP + diphosphate + 2 H(+). It functions in the pathway purine metabolism; GMP biosynthesis; GMP from XMP (L-Gln route): step 1/1. Catalyzes the synthesis of GMP from XMP. The protein is GMP synthase [glutamine-hydrolyzing] of Phocaeicola vulgatus (strain ATCC 8482 / DSM 1447 / JCM 5826 / CCUG 4940 / NBRC 14291 / NCTC 11154) (Bacteroides vulgatus).